A 701-amino-acid polypeptide reads, in one-letter code: Potassium-transporting ATPase ATP-binding subunit 1 (701 aa).

A disordered region spans residues 1–26 (MNPVAPTRKVKPPRNRPSDRRQARKK). The next 4 membrane-spanning stretches (helical) occupy residues 57–77 (MFVVWVATLVTLAVTINPDLF), 90–110 (GLLTGILFFTVWFANFAEAVA), 241–261 (VALTVLLAVLSLVFLFVIATL), and 278–298 (IALLVALIPTTIGGLLSAIGI). Residue Asp329 is the 4-aspartylphosphate intermediate of the active site. ATP contacts are provided by residues Asp366, Glu370, 397-404 (FSAKTRMS), and Lys416. Mg(2+) contacts are provided by Asp539 and Asp543. The next 3 helical transmembrane spans lie at 599-619 (FSIANDIAKYFAIIPVIFAAA), 635-655 (AVLSALIYNALIIPALIPLAL), and 681-701 (VIAPFIAIKLIDILITLVGLA).

The protein belongs to the cation transport ATPase (P-type) (TC 3.A.3) family. Type IA subfamily. In terms of assembly, the system is composed of three essential subunits: KdpA, KdpB and KdpC.

It is found in the cell inner membrane. The catalysed reaction is K(+)(out) + ATP + H2O = K(+)(in) + ADP + phosphate + H(+). In terms of biological role, part of the high-affinity ATP-driven potassium transport (or Kdp) system, which catalyzes the hydrolysis of ATP coupled with the electrogenic transport of potassium into the cytoplasm. This subunit is responsible for energy coupling to the transport system and for the release of the potassium ions to the cytoplasm. The sequence is that of Potassium-transporting ATPase ATP-binding subunit 1 from Nostoc sp. (strain PCC 7120 / SAG 25.82 / UTEX 2576).